The following is a 445-amino-acid chain: 6-phosphogluconate dehydrogenase, decarboxylating (445 aa).

NADP(+) is bound by residues 1–4 (AVMG), 22–24 (NRS), 63–65 (VKA), and N91. Residues N91 and 117 to 119 (SGG) contribute to the substrate site. K172 functions as the Proton acceptor in the catalytic mechanism. 175–176 (HN) lines the substrate pocket. The active-site Proton donor is the E179. Substrate-binding residues include Y180, K249, R276, R434, and H440.

The protein belongs to the 6-phosphogluconate dehydrogenase family. Homodimer.

The catalysed reaction is 6-phospho-D-gluconate + NADP(+) = D-ribulose 5-phosphate + CO2 + NADPH. It functions in the pathway carbohydrate degradation; pentose phosphate pathway; D-ribulose 5-phosphate from D-glucose 6-phosphate (oxidative stage): step 3/3. In terms of biological role, catalyzes the oxidative decarboxylation of 6-phosphogluconate to ribulose 5-phosphate and CO(2), with concomitant reduction of NADP to NADPH. The protein is 6-phosphogluconate dehydrogenase, decarboxylating (gnd) of Raoultella terrigena (Klebsiella terrigena).